The sequence spans 170 residues: Large ribosomal subunit protein bL9 (170 aa).

Positions 149 to 170 (DGDNEDLDEDNAADENEDYSEE) are disordered.

It belongs to the bacterial ribosomal protein bL9 family.

Binds to the 23S rRNA. The chain is Large ribosomal subunit protein bL9 from Psychrobacter cryohalolentis (strain ATCC BAA-1226 / DSM 17306 / VKM B-2378 / K5).